The sequence spans 423 residues: ATP-citrate synthase alpha chain protein 2 (423 aa).

N343, T345, and R376 together coordinate citrate.

The protein belongs to the succinate/malate CoA ligase beta subunit family. Heterooctamer of 4 alpha and 4 beta chains.

Its subcellular location is the cytoplasm. It localises to the cytosol. The catalysed reaction is oxaloacetate + acetyl-CoA + ADP + phosphate = citrate + ATP + CoA. ATP citrate-lyase is the primary enzyme responsible for the synthesis of cytosolic acetyl-CoA, used for the elongation of fatty acids and biosynthesis of isoprenoids, flavonoids and malonated derivatives. May supply substrate to the cytosolic acetyl-CoA carboxylase, which generates the malonyl-CoA used for the synthesis of a multitude of compounds, including very long chain fatty acids and flavonoids. Required for normal growth and development and elongation of C18 fatty acids to C20 to C24 fatty acids in seeds. In contrast to all known animal ACL enzymes having a homomeric structure, plant ACLs are composed of alpha and beta chains. This is ATP-citrate synthase alpha chain protein 2 (ACLA-2) from Arabidopsis thaliana (Mouse-ear cress).